The chain runs to 248 residues: Cobalt transport protein CbiM (248 aa).

An N-terminal signal peptide occupies residues 1–29 (MKRVSVKNYLVCLLIAVCAIFVFPANASA). Helical transmembrane passes span 40-60 (GWCISWGVMCMPFLVIGFFSI), 72-92 (TLLAMCGAFAFVLSALKMPSV), 104-124 (LGAVLFGPTAMSVIGAIILLF), 136-156 (TLGANVFSMAIVGPLVSFGVF), 167-187 (GLAVFLAVFFGDLMTYVITSV), and 210-230 (IFGFTQVPLAVCEGLLTVVIY).

This sequence belongs to the CbiM family. As to quaternary structure, forms an energy-coupling factor (ECF) transporter complex composed of an ATP-binding protein (A component, CbiO), a transmembrane protein (T component, CbiQ) and 2 possible substrate-capture proteins (S components, CbiM and CbiN) of unknown stoichimetry.

The protein localises to the cell membrane. It participates in cofactor biosynthesis; adenosylcobalamin biosynthesis. In terms of biological role, part of the energy-coupling factor (ECF) transporter complex CbiMNOQ involved in cobalt import. The sequence is that of Cobalt transport protein CbiM from Ruminiclostridium cellulolyticum (strain ATCC 35319 / DSM 5812 / JCM 6584 / H10) (Clostridium cellulolyticum).